Reading from the N-terminus, the 246-residue chain is Proteasome subunit alpha (246 aa).

Belongs to the peptidase T1A family. The 20S proteasome core is composed of 14 alpha and 14 beta subunits that assemble into four stacked heptameric rings, resulting in a barrel-shaped structure. The two inner rings, each composed of seven catalytic beta subunits, are sandwiched by two outer rings, each composed of seven alpha subunits. The catalytic chamber with the active sites is on the inside of the barrel. Has a gated structure, the ends of the cylinder being occluded by the N-termini of the alpha-subunits. Is capped by the proteasome-associated ATPase, ARC. Can also interact with the bacterial proteasome activator Bpa through the C-terminal hydrophobic-tyrosine-X motif (HbYX motif) of Bpa; Bpa forms a homooligomeric ring-like structure which stacks co-axially with the proteasomal alpha-rings. In terms of processing, pupylated at an undetermined lysine residue by the prokaryotic ubiquitin-like protein Pup with the help of the ligase PafA, which leads to its degradation by the proteasome and thereby constitutes a negative auto-regulation.

The protein resides in the cytoplasm. Its pathway is protein degradation; proteasomal Pup-dependent pathway. With respect to regulation, the formation of the proteasomal ATPase ARC-20S proteasome complex, likely via the docking of the C-termini of ARC into the intersubunit pockets in the alpha-rings, may trigger opening of the gate for substrate entry. Interconversion between the open-gate and close-gate conformations leads to a dynamic regulation of the 20S proteasome proteolysis activity. PPS auto-regulates its own activity via pupylation and degradation of its components. Peptidolytic activity is inhibited by N-acetyl-Leu-Leu-norleucinal (Ac-LLnL) in vitro. Functionally, component of the proteasome core, a large protease complex with broad specificity involved in protein degradation. The M.smegmatis proteasome is able to cleave oligopeptides after hydrophobic residues, thus displaying chymotrypsin-like activity. In complex with the ATPase Mpa, degrades protein targets conjugated to a prokaryotic ubiquitin-like protein (Pup). Identified substrates of the M.smegmatis proteasome are the pupylated SodA and Ino1 proteins. The Pup-proteasome system (PPS) is essential for survival under starvation; PPS likely functions to recycle amino acids under nitrogen starvation, thereby enabling the cell to maintain basal metabolic activities. The sequence is that of Proteasome subunit alpha from Mycolicibacterium smegmatis (strain ATCC 700084 / mc(2)155) (Mycobacterium smegmatis).